Consider the following 2111-residue polypeptide: Mycocerosic acid synthase-like polyketide synthase (2111 aa).

An N-terminal signal peptide occupies residues 1-15; sequence MTQNCVAPVAIIGMA. C16 is lipidated: N-palmitoyl cysteine. Residue C16 is the site of S-diacylglycerol cysteine attachment. Residues 16 to 428 form the Ketosynthase family 3 (KS3) domain; sequence CRLPGAINSP…GTNVHAVLEQ (413 aa). C178 (acyl-thioester intermediate; for beta-ketoacyl synthase activity) is an active-site residue. Catalysis depends on for beta-ketoacyl synthase activity residues H313 and H349. The interval 430–537 is linker domain (LD); the sequence is PESPAETAAE…MPQQAVTNDD (108 aa). An acyltransferase (AT) region spans residues 538–837; the sequence is RGPVWVFSGQ…LAVFAAMRRQ (300 aa). The active-site Acyl-ester intermediate; for acyltransferase activity is S629. Positions 896–1176 are dehydratase (DH); the sequence is PSVSVHPLLG…LSAMGLQLGT (281 aa). The tract at residues 901–1025 is N-terminal hotdog fold; the sequence is HPLLGSHVVL…GDVDAERPAA (125 aa). The PKS/mFAS DH domain occupies 901 to 1183; it reads HPLLGSHVVL…LGTGNSDKAE (283 aa). The Proton acceptor; for dehydratase activity role is filled by H934. Residues 1036-1183 form a C-terminal hotdog fold region; sequence PNRVDGDELR…LGTGNSDKAE (148 aa). D1100 functions as the Proton donor; for dehydratase activity in the catalytic mechanism. The pseudo beta-ketoacyl reductase (PsiKR) stretch occupies residues 1215–1391; the sequence is SWLVILAGDD…SPEDETAWRD (177 aa). The segment at 1419 to 1743 is enoylreductase (ER); the sequence is EGMRLVVRNP…QHTGKLVIDI (325 aa). Positions 1765 to 2008 are beta-ketoacyl reductase (KR); that stretch reads GAYVITGGLG…RSPFAELFLA (244 aa). Residues 1773–1776, 1796–1799, 1824–1825, and 1902–1903 contribute to the NADP(+) site; these read LGGL, SRSA, DI, and FS. The Carrier domain maps to 2029–2104; the sequence is EEWPTHLRRL…QRLCEMLDTD (76 aa). The residue at position 2064 (S2064) is an O-(pantetheine 4'-phosphoryl)serine.

As to quaternary structure, homodimer.

It localises to the cell membrane. It participates in lipid metabolism; fatty acid biosynthesis. Functionally, polyketide synthase involved in the biosynthesis of 2,4-dimethyl-2-eicosenoic acid, a lipid component of the lipooligosaccharides (LOS) which are not located at the bacterial surface but rather in deeper compartments of the cell envelope of M.smegmatis. In Mycolicibacterium smegmatis (strain ATCC 700084 / mc(2)155) (Mycobacterium smegmatis), this protein is Mycocerosic acid synthase-like polyketide synthase.